Reading from the N-terminus, the 148-residue chain is Putative nickel-responsive regulator (148 aa).

The Ni(2+) site is built by H88, H99, H101, and C107.

This sequence belongs to the transcriptional regulatory CopG/NikR family. Requires Ni(2+) as cofactor.

Transcriptional regulator. The chain is Putative nickel-responsive regulator from Helicobacter pylori (strain G27).